The chain runs to 279 residues: Phycobilisome rod-core linker polypeptide CpcG1 (279 aa).

The region spanning 11–189 is the PBS-linker domain; sequence TTQNQRVEGY…YWRNRLLEQF (179 aa).

It belongs to the phycobilisome linker protein family. In terms of assembly, the phycobilisome is a hemidiscoidal structure that is composed of two distinct substructures: a core complex and a number of rods radiating from the core.

It is found in the cellular thylakoid membrane. Rod-core linker protein required for attachment of phycocyanin to allophycocyanin in cores of phycobilisomes. Its function is as follows. Linker polypeptides determine the state of aggregation and the location of the disk-shaped phycobiliprotein units within the phycobilisome and modulate their spectroscopic properties in order to mediate a directed and optimal energy transfer. The sequence is that of Phycobilisome rod-core linker polypeptide CpcG1 (cpcG1) from Mastigocladus laminosus (Fischerella sp.).